Here is a 169-residue protein sequence, read N- to C-terminus: Ureidoglycolate lyase (169 aa).

It belongs to the ureidoglycolate lyase family. As to quaternary structure, homodimer. Ni(2+) is required as a cofactor.

It catalyses the reaction (S)-ureidoglycolate = urea + glyoxylate. It participates in nitrogen metabolism; (S)-allantoin degradation. In terms of biological role, catalyzes the catabolism of the allantoin degradation intermediate (S)-ureidoglycolate, generating urea and glyoxylate. Involved in the utilization of allantoin as nitrogen source. The polypeptide is Ureidoglycolate lyase (Pseudomonas aeruginosa (strain LESB58)).